Consider the following 91-residue polypeptide: Movement protein TGBp3 (91 aa).

Residues methionine 1–serine 23 lie on the Lumenal side of the membrane. The helical transmembrane segment at alanine 24–threonine 46 threads the bilayer. Residues threonine 47 to lysine 91 lie on the Cytoplasmic side of the membrane.

The protein belongs to the Tymovirales TGBp3 protein family.

It is found in the host endoplasmic reticulum membrane. In terms of biological role, plays a role in viral cell-to-cell propagation, by facilitating genome transport to neighboring plant cells through plasmosdesmata. May induce the formation of granular vesicles derived from the Endoplasmic reticulum, which align on actin filaments. This is Movement protein TGBp3 from Cymbidium mosaic virus (strain Singapore).